The chain runs to 208 residues: Holliday junction resolvase RecU (208 aa).

The Mg(2+) site is built by Thr86, Asp88, Glu101, and Gln120.

This sequence belongs to the RecU family. Requires Mg(2+) as cofactor.

The protein resides in the cytoplasm. The enzyme catalyses Endonucleolytic cleavage at a junction such as a reciprocal single-stranded crossover between two homologous DNA duplexes (Holliday junction).. Endonuclease that resolves Holliday junction intermediates in genetic recombination. Cleaves mobile four-strand junctions by introducing symmetrical nicks in paired strands. Promotes annealing of linear ssDNA with homologous dsDNA. Required for DNA repair, homologous recombination and chromosome segregation. This Lacticaseibacillus casei (strain BL23) (Lactobacillus casei) protein is Holliday junction resolvase RecU.